Consider the following 245-residue polypeptide: Orotidine 5'-phosphate decarboxylase (245 aa).

Substrate contacts are provided by residues D22, K44, 71-80 (DLKFHDIPNT), T131, R192, Q201, G221, and R222. Residue K73 is the Proton donor of the active site.

The protein belongs to the OMP decarboxylase family. Type 1 subfamily. Homodimer.

It carries out the reaction orotidine 5'-phosphate + H(+) = UMP + CO2. It functions in the pathway pyrimidine metabolism; UMP biosynthesis via de novo pathway; UMP from orotate: step 2/2. Functionally, catalyzes the decarboxylation of orotidine 5'-monophosphate (OMP) to uridine 5'-monophosphate (UMP). In Salmonella gallinarum (strain 287/91 / NCTC 13346), this protein is Orotidine 5'-phosphate decarboxylase.